A 77-amino-acid chain; its full sequence is U14-theraphotoxin-Cg1b (77 aa).

The signal sequence occupies residues 1–21; that stretch reads MKTSVLLVILGIAAITVQCTA. A propeptide spanning residues 22 to 49 is cleaved from the precursor; it reads SESVEQDSLRTFVDAVLGWNAEMASEAR. Disulfide bonds link cysteine 50/cysteine 64, cysteine 57/cysteine 69, and cysteine 63/cysteine 75.

This sequence belongs to the neurotoxin 10 (Hwtx-1) family. 65 (Jztx-21) subfamily. Expressed by the venom gland.

It is found in the secreted. In terms of biological role, probable ion channel inhibitor. This Chilobrachys guangxiensis (Chinese earth tiger tarantula) protein is U14-theraphotoxin-Cg1b.